The primary structure comprises 398 residues: MKIDPVELTKKLISFKSITPKDDGAIEHIAAILKKSGFECEILEFGDKVKNLYAKYINGVPNLCFAGHVDVVPPGELKDWISDPFKPEIRDGMLYGRGAADMKSGIAAFIAAIVDSVAGKFRFSGSISALITSAEESTEEHGTKAVLEWMKSKQKKIDFCIVGEPTSSEKLGDTIKIGRRGSATFKLICHGKQGHVAYPELADNPIYKMISILSKIKDTTFDTGNKYFQPSHCEITTIDVGNNTNNLIPSSIAAGFNIRYNNIQTLDGLYKLIDEICSSVTNDYKLSMQSSRNVFLSIPDRNTDIMLDAINKITGIDAVLSTNGGTSDAAFIKDICPVIEFGMINKTAHQVNECVSIDDIHKLTAIYKEFIKNYFYPTNKILNQINVIGNTPDGPLLA.

Histidine 68 is a Zn(2+) binding site. Aspartate 70 is a catalytic residue. Aspartate 101 contributes to the Zn(2+) binding site. The active-site Proton acceptor is the glutamate 135. 3 residues coordinate Zn(2+): glutamate 136, glutamate 164, and histidine 349.

It belongs to the peptidase M20A family. DapE subfamily. As to quaternary structure, homodimer. Zn(2+) serves as cofactor. Co(2+) is required as a cofactor.

The enzyme catalyses N-succinyl-(2S,6S)-2,6-diaminopimelate + H2O = (2S,6S)-2,6-diaminopimelate + succinate. Its pathway is amino-acid biosynthesis; L-lysine biosynthesis via DAP pathway; LL-2,6-diaminopimelate from (S)-tetrahydrodipicolinate (succinylase route): step 3/3. Catalyzes the hydrolysis of N-succinyl-L,L-diaminopimelic acid (SDAP), forming succinate and LL-2,6-diaminopimelate (DAP), an intermediate involved in the bacterial biosynthesis of lysine and meso-diaminopimelic acid, an essential component of bacterial cell walls. This Wolbachia pipientis subsp. Culex pipiens (strain wPip) protein is Succinyl-diaminopimelate desuccinylase.